We begin with the raw amino-acid sequence, 137 residues long: Golgin subfamily A member 7 (137 aa).

2 S-palmitoyl cysteine lipidation sites follow: C69 and C72.

Belongs to the ERF4 family. Interacts with GOLGA3. Interacts with ZDHHC9. In terms of processing, palmitoylated on Cys-69 and Cys-72; which is required for Golgi localization and interaction with GOLGA3.

The protein localises to the golgi apparatus membrane. Its function is as follows. May be involved in protein transport from Golgi to cell surface. The ZDHHC9-GOLGA7 complex is a palmitoyltransferase specific for HRAS and NRAS. The polypeptide is Golgin subfamily A member 7 (Golga7) (Rattus norvegicus (Rat)).